The primary structure comprises 932 residues: Protein translocase subunit SecA (932 aa).

ATP is bound by residues Gln-87, 105–109 (GEGKT), and Asp-515. The Zn(2+) site is built by Cys-916, Cys-918, Cys-927, and His-928.

The protein belongs to the SecA family. In terms of assembly, monomer and homodimer. Part of the essential Sec protein translocation apparatus which comprises SecA, SecYEG and auxiliary proteins SecDF-YajC and YidC. Zn(2+) is required as a cofactor.

The protein localises to the cell inner membrane. Its subcellular location is the cytoplasm. It catalyses the reaction ATP + H2O + cellular proteinSide 1 = ADP + phosphate + cellular proteinSide 2.. In terms of biological role, part of the Sec protein translocase complex. Interacts with the SecYEG preprotein conducting channel. Has a central role in coupling the hydrolysis of ATP to the transfer of proteins into and across the cell membrane, serving both as a receptor for the preprotein-SecB complex and as an ATP-driven molecular motor driving the stepwise translocation of polypeptide chains across the membrane. In Burkholderia lata (strain ATCC 17760 / DSM 23089 / LMG 22485 / NCIMB 9086 / R18194 / 383), this protein is Protein translocase subunit SecA.